A 284-amino-acid polypeptide reads, in one-letter code: D-tagatose-1,6-bisphosphate aldolase subunit GatY (284 aa).

The Proton donor role is filled by D82. Zn(2+)-binding residues include H83 and H180. Dihydroxyacetone phosphate is bound at residue G181. H208 is a Zn(2+) binding site. Dihydroxyacetone phosphate is bound by residues 209–211 (GAS) and 230–233 (NVAT).

Belongs to the class II fructose-bisphosphate aldolase family. TagBP aldolase GatY subfamily. As to quaternary structure, forms a complex with GatZ. Zn(2+) serves as cofactor.

The catalysed reaction is D-tagatofuranose 1,6-bisphosphate = D-glyceraldehyde 3-phosphate + dihydroxyacetone phosphate. Its pathway is carbohydrate metabolism; D-tagatose 6-phosphate degradation; D-glyceraldehyde 3-phosphate and glycerone phosphate from D-tagatose 6-phosphate: step 2/2. In terms of biological role, catalytic subunit of the tagatose-1,6-bisphosphate aldolase GatYZ, which catalyzes the reversible aldol condensation of dihydroxyacetone phosphate (DHAP or glycerone-phosphate) with glyceraldehyde 3-phosphate (G3P) to produce tagatose 1,6-bisphosphate (TBP). Requires GatZ subunit for full activity and stability. Is involved in the catabolism of galactitol and D-tagatose. The sequence is that of D-tagatose-1,6-bisphosphate aldolase subunit GatY (gatY) from Klebsiella oxytoca.